The primary structure comprises 238 residues: Dolichyldiphosphatase 1 (238 aa).

4 helical membrane-spanning segments follow: residues 33–53, 100–120, 130–150, and 162–182; these read LAYL…LIIF, PSSH…FLYL, FLDL…AFLV, and WSQV…WFIF.

This sequence belongs to the dolichyldiphosphatase family.

The protein localises to the endoplasmic reticulum membrane. The enzyme catalyses a di-trans,poly-cis-dolichyl diphosphate + H2O = a di-trans,poly-cis-dolichyl phosphate + phosphate + H(+). It participates in protein modification; protein glycosylation. Functionally, required for efficient N-glycosylation. Necessary for maintaining optimal levels of dolichol-linked oligosaccharides. Hydrolyzes dolichyl pyrophosphate at a very high rate and dolichyl monophosphate at a much lower rate. Does not act on phosphatidate. The protein is Dolichyldiphosphatase 1 (DOLPP1) of Plecturocebus moloch (Dusky titi monkey).